We begin with the raw amino-acid sequence, 182 residues long: Adenine phosphoribosyltransferase (182 aa).

The protein belongs to the purine/pyrimidine phosphoribosyltransferase family. As to quaternary structure, homodimer.

It localises to the cytoplasm. The catalysed reaction is AMP + diphosphate = 5-phospho-alpha-D-ribose 1-diphosphate + adenine. The protein operates within purine metabolism; AMP biosynthesis via salvage pathway; AMP from adenine: step 1/1. Functionally, catalyzes a salvage reaction resulting in the formation of AMP, that is energically less costly than de novo synthesis. This is Adenine phosphoribosyltransferase from Pseudomonas syringae pv. syringae (strain B728a).